The following is a 207-amino-acid chain: Thiamine-phosphate synthase (207 aa).

4-amino-2-methyl-5-(diphosphooxymethyl)pyrimidine contacts are provided by residues 36–40 (QMRIK) and Asp68. Mg(2+)-binding residues include Asp69 and Asp88. Ser106 provides a ligand contact to 4-amino-2-methyl-5-(diphosphooxymethyl)pyrimidine. Residue 132–134 (TKT) coordinates 2-[(2R,5Z)-2-carboxy-4-methylthiazol-5(2H)-ylidene]ethyl phosphate. Lys135 is a binding site for 4-amino-2-methyl-5-(diphosphooxymethyl)pyrimidine. 2-[(2R,5Z)-2-carboxy-4-methylthiazol-5(2H)-ylidene]ethyl phosphate contacts are provided by residues Gly162 and 182 to 183 (IS).

It belongs to the thiamine-phosphate synthase family. The cofactor is Mg(2+).

The enzyme catalyses 2-[(2R,5Z)-2-carboxy-4-methylthiazol-5(2H)-ylidene]ethyl phosphate + 4-amino-2-methyl-5-(diphosphooxymethyl)pyrimidine + 2 H(+) = thiamine phosphate + CO2 + diphosphate. It catalyses the reaction 2-(2-carboxy-4-methylthiazol-5-yl)ethyl phosphate + 4-amino-2-methyl-5-(diphosphooxymethyl)pyrimidine + 2 H(+) = thiamine phosphate + CO2 + diphosphate. It carries out the reaction 4-methyl-5-(2-phosphooxyethyl)-thiazole + 4-amino-2-methyl-5-(diphosphooxymethyl)pyrimidine + H(+) = thiamine phosphate + diphosphate. It functions in the pathway cofactor biosynthesis; thiamine diphosphate biosynthesis; thiamine phosphate from 4-amino-2-methyl-5-diphosphomethylpyrimidine and 4-methyl-5-(2-phosphoethyl)-thiazole: step 1/1. Functionally, condenses 4-methyl-5-(beta-hydroxyethyl)thiazole monophosphate (THZ-P) and 2-methyl-4-amino-5-hydroxymethyl pyrimidine pyrophosphate (HMP-PP) to form thiamine monophosphate (TMP). This Pyrococcus furiosus (strain ATCC 43587 / DSM 3638 / JCM 8422 / Vc1) protein is Thiamine-phosphate synthase.